Here is a 189-residue protein sequence, read N- to C-terminus: Transcriptional repressor NrdR (189 aa).

The segment at 3–34 (CPFCRGDDSRVVDSREVEDGQAIRRRRSCSGC) is a zinc-finger region. The 91-residue stretch at 46-136 (LSVVKRSGVT…VYRAFSSVED (91 aa)) folds into the ATP-cone domain. Residues 152 to 189 (RLPEGPEAAQGGPESKAGNGQAAGSGDPEGVKAEKSSE) are disordered. The segment covering 180 to 189 (EGVKAEKSSE) has biased composition (basic and acidic residues).

The protein belongs to the NrdR family. Requires Zn(2+) as cofactor.

Negatively regulates transcription of bacterial ribonucleotide reductase nrd genes and operons by binding to NrdR-boxes. In Saccharopolyspora erythraea (strain ATCC 11635 / DSM 40517 / JCM 4748 / NBRC 13426 / NCIMB 8594 / NRRL 2338), this protein is Transcriptional repressor NrdR.